A 579-amino-acid chain; its full sequence is MPRDETPEREHAEQQSRQALEEEVRELRRRVEEAPSRVRALEEKLLEVSGALAQTQAKNEKLTFTLQQAREHIQNLREEVEKLTQPPSAYGVYLAANQDGTADVFTTGRKMRVAVHPEIDLAAVRVGQEVVLNESFAIVSVRGSDVIGEVATVKDVLDDGSRVILLGRADEERVAQVAGHLQHPPLRVGDSVMVDPRSAMVLERLPRPEVSELALEEVPDITYHDIGGLDRQIEEIQDAVELPFLYRELFGDYRLPAPKGILLYGPPGCGKTLIAKAVANSLAKKVEQVSGRSVRSYFLNVKGPELLNKYVGETERQIRLIFQRAREKAEEGVPVIVFFDEMDSLFRTRGSGISSDMESTVVPQLLAEIDGVEALRNVIVIGASNREDLIDPAILRPGRLDVKIKIERPDEQAAREIFARYLTPEVPIDAGEVTTLGGGDAEKAIAVMIERTVERMYATSDENRFLEVTYQNGEKEILYFKDFSSGAMIENIVRRAKKLAIKREIAGGSRGICLDDLLASIAKEFKEHEDLPNTTNPDDWAKISGRKGERIVFMRILLHEEEGQTGGRAIERVATGQYL.

Residues 1 to 21 (MPRDETPEREHAEQQSRQALE) form a disordered region. Positions 8 to 86 (EREHAEQQSR…REEVEKLTQP (79 aa)) form a coiled coil. Residue 268–273 (GCGKTL) coordinates ATP. The interval 578–579 (YL) is docks into pockets in the proteasome alpha-ring.

Belongs to the AAA ATPase family. Homohexamer. Assembles into a hexameric ring structure that caps the 20S proteasome core. Strongly interacts with the prokaryotic ubiquitin-like protein Pup through a hydrophobic interface; the interacting region of ARC lies in its N-terminal coiled-coil domain. There is one Pup binding site per ARC hexamer ring. Upon ATP-binding, the C-terminus of ARC interacts with the alpha-rings of the proteasome core, possibly by binding to the intersubunit pockets.

It participates in protein degradation; proteasomal Pup-dependent pathway. ATPase which is responsible for recognizing, binding, unfolding and translocation of pupylated proteins into the bacterial 20S proteasome core particle. May be essential for opening the gate of the 20S proteasome via an interaction with its C-terminus, thereby allowing substrate entry and access to the site of proteolysis. Thus, the C-termini of the proteasomal ATPase may function like a 'key in a lock' to induce gate opening and therefore regulate proteolysis. The sequence is that of Proteasome-associated ATPase from Acidimicrobium ferrooxidans (strain DSM 10331 / JCM 15462 / NBRC 103882 / ICP).